Consider the following 249-residue polypeptide: Protein-lysine 6-oxidase (249 aa).

At Y19 the chain carries Sulfotyrosine. The tract at residues 45 to 249 (PDLVPDPYYI…YASGCTISPY (205 aa)) is lysyl-oxidase like. 5 disulfide bridges follow: C70/C76, C123/C172, C156/C162, C183/C193, and C230/C244. Cu cation contacts are provided by H124, H126, and H128. The segment at residues 152 to 187 (KASFCLEDTSCDYGYHRRFACTAHTQGLSPGCYDTY) is a cross-link (lysine tyrosylquinone (Lys-Tyr)). At Y187 the chain carries 2',4',5'-topaquinone.

It belongs to the lysyl oxidase family. Interacts with MFAP4. Interacts (via propeptide) with EFEMP2; this interaction is strong and facilitates formation of ternary complexes with ELN during elastic fiber assembly; this interaction limits interaction of EFEMP2 with FBLN5. Cu cation serves as cofactor. Lysine tyrosylquinone residue is required as a cofactor. Post-translationally, the lysine tyrosylquinone cross-link (LTQ) is generated by condensation of the epsilon-amino group of a lysine with a topaquinone produced by oxidation of tyrosine. Proteolytically cleaved by BMP1 which removes the propeptide. Also proteolytically cleaved by ADAMTS2 and ADAMTS14, but not by ADAMTS3, at an additional cleavage site downstream of the BMP1 cleavage site. The propeptide plays a role in directing the deposition of this enzyme to elastic fibers, via interaction with tropoelastin. Cleavage by BMP1 to remove the propeptide does not increase enzymatic activity but increases binding to collagen. Cleavage by ADAMTS2 produces a form with reduced collagen-binding activity. In terms of processing, sulfated at Tyr-19 and also at either Tyr-15 or Tyr-16 which enhances binding to collagen.

Its subcellular location is the secreted. It localises to the extracellular space. It carries out the reaction L-lysyl-[protein] + O2 + H2O = (S)-2-amino-6-oxohexanoyl-[protein] + H2O2 + NH4(+). Functionally, responsible for the post-translational oxidative deamination of peptidyl lysine residues in precursors to fibrous collagen and elastin. Regulator of Ras expression. May play a role in tumor suppression. Plays a role in the aortic wall architecture. The chain is Protein-lysine 6-oxidase from Sus scrofa (Pig).